The primary structure comprises 499 residues: Probable cytosol aminopeptidase (499 aa).

Mn(2+) contacts are provided by Lys-262 and Asp-267. Residue Lys-274 is part of the active site. Mn(2+) contacts are provided by Asp-285, Asp-344, and Glu-346. Arg-348 is an active-site residue.

It belongs to the peptidase M17 family. The cofactor is Mn(2+).

The protein localises to the cytoplasm. The enzyme catalyses Release of an N-terminal amino acid, Xaa-|-Yaa-, in which Xaa is preferably Leu, but may be other amino acids including Pro although not Arg or Lys, and Yaa may be Pro. Amino acid amides and methyl esters are also readily hydrolyzed, but rates on arylamides are exceedingly low.. It catalyses the reaction Release of an N-terminal amino acid, preferentially leucine, but not glutamic or aspartic acids.. Functionally, presumably involved in the processing and regular turnover of intracellular proteins. Catalyzes the removal of unsubstituted N-terminal amino acids from various peptides. The chain is Probable cytosol aminopeptidase from Protochlamydia amoebophila (strain UWE25).